The primary structure comprises 38 residues: Turripeptide GpIAa (38 aa).

It belongs to the turripeptide family. In terms of tissue distribution, expressed by the venom duct.

It localises to the secreted. The protein is Turripeptide GpIAa of Cryptogemma periscelida (Atlantic gem-turris).